We begin with the raw amino-acid sequence, 120 residues long: Fluoride-specific ion channel FluC (120 aa).

3 helical membrane-spanning segments follow: residues 30-50 (FGTL…YGLL), 66-86 (VGFL…LLLL), and 96-116 (LNII…LQLV). Residues Gly-70 and Thr-73 each contribute to the Na(+) site.

This sequence belongs to the fluoride channel Fluc/FEX (TC 1.A.43) family.

The protein localises to the cell inner membrane. It catalyses the reaction fluoride(in) = fluoride(out). With respect to regulation, na(+) is not transported, but it plays an essential structural role and its presence is essential for fluoride channel function. Fluoride-specific ion channel. Important for reducing fluoride concentration in the cell, thus reducing its toxicity. This chain is Fluoride-specific ion channel FluC, found in Pseudoalteromonas translucida (strain TAC 125).